The following is a 401-amino-acid chain: MKSVIFGLQWGDEGKGKVTTYFSKDYDYVVRYSGGSNAGHTVEYTDFKLIHHLLPSFYVKKNVGAIISNGVVLDLEQLVEEIEEFKSKTGTYPKLYISELAHVVLPHHKKLDEKLEQIKGKNAVGTTKRGIGPAYADKVHRIGIRLSDFKNKDKFYEKIKNISKLYKNLYNIEVESIENVLTSYEKLKSHIVPHGEIINLINQNKILFESTQGVLLDIDVGTYPYVTGANCNTTGIQNGVGFPVKTENYIGVFKAYLTRVGNGPFPTEAFGKEGEEIRKRGHEFGATTGRPRRCGWLDLPLLKYAITVSGATELVMTKGDILNGMEKIKVCVAYKIDGNIVDRISSVDDLEKAEPIYETLDGWENHTSKEFNEYLSFIESYVKRKITHISVGPKVEEIIKL.

GTP is bound by residues 11–17 and 39–41; these read GDEGKGK and GHT. Asp12 functions as the Proton acceptor in the catalytic mechanism. 2 residues coordinate Mg(2+): Asp12 and Gly39. IMP-binding positions include 12 to 15, 37 to 40, Thr127, Arg141, Gln212, Thr227, and Arg290; these read DEGK and NAGH. The active-site Proton donor is the His40. 286 to 292 is a substrate binding site; sequence ATTGRPR. GTP is bound by residues Arg292, 318–320, and 390–392; these read KGD and SVG.

This sequence belongs to the adenylosuccinate synthetase family. In terms of assembly, homodimer. It depends on Mg(2+) as a cofactor.

It is found in the cytoplasm. The catalysed reaction is IMP + L-aspartate + GTP = N(6)-(1,2-dicarboxyethyl)-AMP + GDP + phosphate + 2 H(+). It participates in purine metabolism; AMP biosynthesis via de novo pathway; AMP from IMP: step 1/2. In terms of biological role, plays an important role in the de novo pathway of purine nucleotide biosynthesis. Catalyzes the first committed step in the biosynthesis of AMP from IMP. The polypeptide is Adenylosuccinate synthetase (Thermosipho africanus (strain TCF52B)).